The sequence spans 476 residues: Riboflavin transporter rft-2 (476 aa).

A helical transmembrane segment spans residues 1–21; sequence MGCSAATFILVALFGSSSWMG. Topologically, residues 22-41 are cytoplasmic; the sequence is TNSVWMQLPLLTSELPEQWN. A helical membrane pass occupies residues 42–62; it reads LPSYLAGVVQIACIVPLIYTI. Over 63-75 the chain is Extracellular; that stretch reads LHKGVKSFTIPTA. The helical transmembrane segment at 76-96 threads the bilayer; sequence PLIIALLSLACCCQLGLSFFW. Residues 97 to 113 lie on the Cytoplasmic side of the membrane; sequence SDYSEIFGAPRSWPLYS. The chain crosses the membrane as a helical span at residues 114 to 134; sequence LLFGLAIVNAMSNVLFMPFMA. Topologically, residues 135 to 140 are extracellular; that stretch reads QFHPAY. A helical membrane pass occupies residues 141–161; sequence LNAYFVGMGLSSLAPSLLSLA. The Cytoplasmic segment spans residues 162–185; that stretch reads QGTSMFKCDEKGVAERFPPNFSVS. The helical transmembrane segment at 186-206 threads the bilayer; sequence IFFFVIFSFTCVALFAFIALY. Residues 207–306 lie on the Extracellular side of the membrane; sequence RSGAHTHFAT…HPVDYITGVK (100 aa). A disordered region spans residues 215-249; that stretch reads ATPNKKEPNEGTPLKKDLNNTSSSRKGDDEDESPI. Basic and acidic residues predominate over residues 218 to 232; that stretch reads NKKEPNEGTPLKKDL. The N-linked (GlcNAc...) asparagine glycan is linked to Asn233. A helical transmembrane segment spans residues 307–327; the sequence is FTFLLFTTALVNAQMNGIITS. Residues 328–342 are Cytoplasmic-facing; the sequence is VQSYAALPYSQATYH. A helical transmembrane segment spans residues 343–363; sequence FAVTLSNVVSPLSSFLPFFIS. At 364-366 the chain is on the extracellular side; that stretch reads VRS. Residues 367–387 traverse the membrane as a helical segment; that stretch reads IPVLAILTACSTAMTAFIVYL. At 388 to 393 the chain is on the cytoplasmic side; that stretch reads AALSPN. Residues 394 to 414 form a helical membrane-spanning segment; sequence LIFNSVTIGSALSIGGSLIAA. Residues 415 to 437 are Extracellular-facing; the sequence is GLHSYLRVVFASLLREGHQSESR. A helical transmembrane segment spans residues 438 to 458; it reads LFWCGVFIQIGSFIGSAVMFP. Residues 459–476 are Cytoplasmic-facing; that stretch reads LVNIAHLFTSAPQCKSIS.

It belongs to the riboflavin transporter family. As to expression, expressed in intestine and pharynx.

Its subcellular location is the cell membrane. It carries out the reaction riboflavin(in) = riboflavin(out). In terms of biological role, riboflavin transporter. The protein is Riboflavin transporter rft-2 of Caenorhabditis elegans.